The primary structure comprises 243 residues: Hydroxyacylglutathione hydrolase (243 aa).

Residues H52, H54, D56, H57, H108, D125, and H163 each contribute to the Zn(2+) site.

It belongs to the metallo-beta-lactamase superfamily. Glyoxalase II family. In terms of assembly, monomer. Zn(2+) serves as cofactor.

The catalysed reaction is an S-(2-hydroxyacyl)glutathione + H2O = a 2-hydroxy carboxylate + glutathione + H(+). Its pathway is secondary metabolite metabolism; methylglyoxal degradation; (R)-lactate from methylglyoxal: step 2/2. Thiolesterase that catalyzes the hydrolysis of S-D-lactoyl-glutathione to form glutathione and D-lactic acid. The polypeptide is Hydroxyacylglutathione hydrolase (Haemophilus influenzae (strain PittGG)).